A 542-amino-acid polypeptide reads, in one-letter code: CTP synthase (542 aa).

Residues 1–265 (MTKYIFVTGG…LKPISKELSL (265 aa)) form an amidoligase domain region. Ser13 is a CTP binding site. Ser13 contacts UTP. Residues 14–19 (SLGKGI) and Asp71 contribute to the ATP site. Positions 71 and 139 each coordinate Mg(2+). Residues 146 to 148 (DIE), 186 to 191 (KSKPTQ), and Lys222 each bind CTP. Residues 186–191 (KSKPTQ) and Lys222 each bind UTP. The 252-residue stretch at 290 to 541 (VLGFVGKYLE…VEATLAISQE (252 aa)) folds into the Glutamine amidotransferase type-1 domain. Gly352 is an L-glutamine binding site. The active-site Nucleophile; for glutamine hydrolysis is Cys379. L-glutamine is bound by residues 380–383 (LGMQ), Glu403, and Arg471. Active-site residues include His514 and Glu516.

This sequence belongs to the CTP synthase family. Homotetramer.

The catalysed reaction is UTP + L-glutamine + ATP + H2O = CTP + L-glutamate + ADP + phosphate + 2 H(+). The enzyme catalyses L-glutamine + H2O = L-glutamate + NH4(+). It carries out the reaction UTP + NH4(+) + ATP = CTP + ADP + phosphate + 2 H(+). It functions in the pathway pyrimidine metabolism; CTP biosynthesis via de novo pathway; CTP from UDP: step 2/2. Allosterically activated by GTP, when glutamine is the substrate; GTP has no effect on the reaction when ammonia is the substrate. The allosteric effector GTP functions by stabilizing the protein conformation that binds the tetrahedral intermediate(s) formed during glutamine hydrolysis. Inhibited by the product CTP, via allosteric rather than competitive inhibition. In terms of biological role, catalyzes the ATP-dependent amination of UTP to CTP with either L-glutamine or ammonia as the source of nitrogen. Regulates intracellular CTP levels through interactions with the four ribonucleotide triphosphates. The polypeptide is CTP synthase (Sulfurimonas denitrificans (strain ATCC 33889 / DSM 1251) (Thiomicrospira denitrificans (strain ATCC 33889 / DSM 1251))).